The chain runs to 274 residues: uncharacterized protein (274 aa).

Positions 99–206 (NNVISGYVDL…ESEMEIFIQK (108 aa)) form a coiled coil.

This is an uncharacterized protein from Dictyostelium discoideum (Social amoeba).